The following is a 382-amino-acid chain: Pectinesterase (382 aa).

A signal peptide spans 1 to 16 (MKIIVLLLLAVVLASA). An intrachain disulfide couples Cys-153 to Cys-164. Asn-179 carries an N-linked (GlcNAc...) asparagine glycan. Gln-193 contributes to the substrate binding site. Catalysis depends on Asp-216, which acts as the Proton donor. The active-site Nucleophile is the Asp-242. Arg-306 and Trp-308 together coordinate substrate. N-linked (GlcNAc...) asparagine glycosylation is found at Asn-340 and Asn-376.

This sequence belongs to the pectinesterase family. Expressed throughout the midgut with particularly strong expression in the ventriculus.

The protein resides in the secreted. It carries out the reaction [(1-&gt;4)-alpha-D-galacturonosyl methyl ester](n) + n H2O = [(1-&gt;4)-alpha-D-galacturonosyl](n) + n methanol + n H(+). Its pathway is glycan metabolism; pectin degradation; 2-dehydro-3-deoxy-D-gluconate from pectin: step 1/5. Functionally, pectinesterase which probably plays an important role in the digestion of plant cell walls. The chain is Pectinesterase from Sitophilus oryzae (Rice weevil).